A 207-amino-acid chain; its full sequence is ATP-dependent dethiobiotin synthetase BioD (207 aa).

ATP is bound at residue 13 to 18; it reads EVGKTV. Thr-17 contributes to the Mg(2+) binding site. Lys-33 is an active-site residue. ATP-binding positions include Asp-44 and 100–103; that span reads EGAG. Mg(2+) is bound by residues Asp-44 and Glu-100.

Belongs to the dethiobiotin synthetase family. In terms of assembly, homodimer. Mg(2+) serves as cofactor.

Its subcellular location is the cytoplasm. It catalyses the reaction (7R,8S)-7,8-diammoniononanoate + CO2 + ATP = (4R,5S)-dethiobiotin + ADP + phosphate + 3 H(+). Its pathway is cofactor biosynthesis; biotin biosynthesis; biotin from 7,8-diaminononanoate: step 1/2. Functionally, catalyzes a mechanistically unusual reaction, the ATP-dependent insertion of CO2 between the N7 and N8 nitrogen atoms of 7,8-diaminopelargonic acid (DAPA, also called 7,8-diammoniononanoate) to form a ureido ring. The polypeptide is ATP-dependent dethiobiotin synthetase BioD (Christiangramia forsetii (strain DSM 17595 / CGMCC 1.15422 / KT0803) (Gramella forsetii)).